Consider the following 845-residue polypeptide: Protein SPA1-RELATED 3 (845 aa).

A compositionally biased stretch (polar residues) spans 1 to 19; that stretch reads MEGSSNSNSRGFNTSGVSD. 2 disordered regions span residues 1–33 and 139–158; these read MEGS…LTTR and CSDS…KEIG. One can recognise a Protein kinase domain in the interval 1–297; that stretch reads MEGSSNSNSR…MSDLLQSEFI (297 aa). The stretch at 301-329 forms a coiled coil; sequence RDNLEEREAAIELRDRIEEQESLLEFLLL. WD repeat units follow at residues 532–571, 581–621, 624–664, 666–706, 710–748, 757–796, and 812–845; these read NSSN…NDNR, AGRS…LVTE, EHKK…SIGT, KTKA…IPLC, GHSK…SGIN, GHTN…PVMS, and DASQ…EMMT. The DWD box motif lies at 685 to 699; sequence AFGSADHKVYYYDLR.

Interacts with COP1 and CO.

The protein resides in the nucleus. Functionally, repressor of photomorphogenesis in the light. Probably part of the COP1/SPA E3 ubiquitin-protein ligase complex. The chain is Protein SPA1-RELATED 3 (SPA3) from Arabidopsis thaliana (Mouse-ear cress).